We begin with the raw amino-acid sequence, 352 residues long: S-adenosylmethionine:tRNA ribosyltransferase-isomerase (352 aa).

The protein belongs to the QueA family. As to quaternary structure, monomer.

The protein resides in the cytoplasm. It carries out the reaction 7-aminomethyl-7-carbaguanosine(34) in tRNA + S-adenosyl-L-methionine = epoxyqueuosine(34) in tRNA + adenine + L-methionine + 2 H(+). Its pathway is tRNA modification; tRNA-queuosine biosynthesis. Transfers and isomerizes the ribose moiety from AdoMet to the 7-aminomethyl group of 7-deazaguanine (preQ1-tRNA) to give epoxyqueuosine (oQ-tRNA). The sequence is that of S-adenosylmethionine:tRNA ribosyltransferase-isomerase from Solibacter usitatus (strain Ellin6076).